Consider the following 361-residue polypeptide: MKASIRNKLERLRERHEEISALLAEPDTASDQKRFAALSREYAQLEPVIAELNHYQETEQALASAREMARDDDLEIREMAEEEISQAQARLEALEAELQVLLLPPDPNDGRNLYLEIRAGTGGDEAALFAGDLLRMYARYAERHGWRLEEISASEGEQGGYKEVITRISGEGAWSRLKFESGAHRVQRVPETESQGRIHTSACTVAVLPEPDAVEDITINPAELRVDTFRASGAGGQHVNKTDSAIRITHLPTGVVVECQSERSQHKNRAQALALLQARLKNAQQAEQSAQQTEQRRQLVGSGDRSERIRTYNFPQGRITDHRINLTLYRLEEILQGDLDQLVEPLRTEHQADQLAALAGD.

At glutamine 237 the chain carries N5-methylglutamine. Positions 285 to 306 (QAEQSAQQTEQRRQLVGSGDRS) are disordered.

This sequence belongs to the prokaryotic/mitochondrial release factor family. Post-translationally, methylated by PrmC. Methylation increases the termination efficiency of RF1.

The protein resides in the cytoplasm. In terms of biological role, peptide chain release factor 1 directs the termination of translation in response to the peptide chain termination codons UAG and UAA. This Alkalilimnicola ehrlichii (strain ATCC BAA-1101 / DSM 17681 / MLHE-1) protein is Peptide chain release factor 1.